Reading from the N-terminus, the 248-residue chain is CKLF-like MARVEL transmembrane domain-containing protein 2 (248 aa).

The disordered stretch occupies residues 1–63 (MAPKAAKGAK…KAVQPKHEVG (63 aa)). Over residues 12-22 (EPAPAPPPPGA) the composition is skewed to pro residues. The segment covering 23-63 (KPEEDKKDGKEPSDKPQKAVQDHKEPSDKPQKAVQPKHEVG) has biased composition (basic and acidic residues). Residues 82-204 (FWLLGHAEIK…DVCLQRNHFR (123 aa)) enclose the MARVEL domain. The next 3 membrane-spanning stretches (helical) occupy residues 116 to 136 (LIIT…SFAI), 147 to 167 (ISDL…VVFA), and 178 to 198 (YLLA…DVCL). Residues 208-248 (AKKHMLVPPPGKEKGPQQGKGPEPAKPPEPGKPPGPAKGKK) are disordered. A compositionally biased stretch (pro residues) spans 231–248 (PAKPPEPGKPPGPAKGKK).

It belongs to the chemokine-like factor family. In terms of tissue distribution, highly expressed in testis.

It is found in the membrane. In Homo sapiens (Human), this protein is CKLF-like MARVEL transmembrane domain-containing protein 2 (CMTM2).